Reading from the N-terminus, the 384-residue chain is Interstitial collagenase (384 aa).

Residues 1-25 form the signal peptide; that stretch reads MLSGLWSSILALLGVFLQSVGEFRA. A propeptide spans 26–88 (activation peptide); it reads ETQEQDVEIV…STCGVPDVGE (63 aa). A Cysteine switch motif is present at residues 79–86; that stretch reads STCGVPDV. Residue cysteine 81 participates in Zn(2+) binding. Aspartate 113 and aspartate 129 together coordinate Ca(2+). Positions 139 and 141 each coordinate Zn(2+). Residues aspartate 146, glycine 147, glycine 149, and asparagine 151 each coordinate Ca(2+). Histidine 154 contacts Zn(2+). Glycine 161, glycine 163, and aspartate 165 together coordinate Ca(2+). Zn(2+) is bound at residue histidine 167. Ca(2+) is bound by residues aspartate 169, glutamate 170, and glutamate 172. Histidine 189 is a Zn(2+) binding site. The active site involves glutamate 190. Zn(2+) is bound by residues histidine 193 and histidine 199. The interval 218-239 is disordered; sequence LSQDDIDGPSGNPVQPRGPQTP. Residues cysteine 242 and cysteine 381 are joined by a disulfide bond. Ca(2+) is bound by residues aspartate 249, glutamine 277, and aspartate 347. Hemopexin repeat units lie at residues 273-319 and 333-381; these read ELGL…FGFP and KQSM…WFNC.

Belongs to the peptidase M10A family. The cofactor is Ca(2+). Zn(2+) is required as a cofactor.

It localises to the secreted. Its subcellular location is the extracellular space. The protein resides in the extracellular matrix. It carries out the reaction Cleavage of the triple helix of collagen at about three-quarters of the length of the molecule from the N-terminus, at 775-Gly-|-Ile-776 in the alpha1(I) chain. Cleaves synthetic substrates and alpha-macroglobulins at bonds where P1' is a hydrophobic residue.. With respect to regulation, can be activated without removal of the activation peptide. In terms of biological role, cleaves collagens of types I, II, and III at one site in the helical domain. Also cleaves collagens of types VII and X. The polypeptide is Interstitial collagenase (Aquarana catesbeiana (American bullfrog)).